Consider the following 354-residue polypeptide: DNA polymerase IV (354 aa).

A UmuC domain is found at 3–188 (VIFVDFDYFF…LDIDEIPGIG (186 aa)). The Mg(2+) site is built by D7 and D105. Residue E106 is part of the active site.

This sequence belongs to the DNA polymerase type-Y family. Monomer. Mg(2+) is required as a cofactor.

It localises to the cytoplasm. It carries out the reaction DNA(n) + a 2'-deoxyribonucleoside 5'-triphosphate = DNA(n+1) + diphosphate. Functionally, poorly processive, error-prone DNA polymerase involved in untargeted mutagenesis. Copies undamaged DNA at stalled replication forks, which arise in vivo from mismatched or misaligned primer ends. These misaligned primers can be extended by PolIV. Exhibits no 3'-5' exonuclease (proofreading) activity. May be involved in translesional synthesis. This is DNA polymerase IV from Sulfolobus acidocaldarius (strain ATCC 33909 / DSM 639 / JCM 8929 / NBRC 15157 / NCIMB 11770).